We begin with the raw amino-acid sequence, 157 residues long: Phosphopantetheine adenylyltransferase (157 aa).

Position 8 (T8) interacts with substrate. ATP is bound by residues 8-9 (TF) and H16. Positions 40, 72, and 86 each coordinate substrate. ATP-binding positions include 87 to 89 (GLR), E97, and 122 to 128 (YSFLSSS).

It belongs to the bacterial CoaD family. In terms of assembly, homohexamer. Requires Mg(2+) as cofactor.

It is found in the cytoplasm. The enzyme catalyses (R)-4'-phosphopantetheine + ATP + H(+) = 3'-dephospho-CoA + diphosphate. The protein operates within cofactor biosynthesis; coenzyme A biosynthesis; CoA from (R)-pantothenate: step 4/5. Functionally, reversibly transfers an adenylyl group from ATP to 4'-phosphopantetheine, yielding dephospho-CoA (dPCoA) and pyrophosphate. The sequence is that of Phosphopantetheine adenylyltransferase from Prochlorococcus marinus (strain MIT 9312).